The chain runs to 43 residues: Bacteriocin weissellin-A (43 aa).

Residues cysteine 9 and cysteine 14 are joined by a disulfide bond.

The protein localises to the secreted. Highly active against Gram-positive bacteria M.flavus strain ATCC 400, M.luteus strain CECT241, C.soprogenes strain NCTC533, L.monocytogenes strain ATCC 19111, L.inocua strain ATCC BAA-680D and S.carnosus strain LMG13564. Less active against B.cereus strain LMG13569, C.thiaminolyticum strain ATCC 15579, E.faecalis strain NCTC8176, L.lactis strain LM0230, L.casei strain ATCC 344, L.lactis strain IL1403, L.jensenii strain ATCC 25258, L.plantarum strain CECT220, L.brevis strain ATCC 8287, L.bulgaricus strain LMG13551, P.acidilactici strain ATCC 25740, P.pentosaceus strain ATCC 33316 and P.pentosaceus strain LMG13560. Weakly active against L.mesenteroides strain ATCC 19254, L.lactis strain ATCC 1454, L.sakei strain CECT906T, L.lactis subsp. cremoris strain MC1363 and L.curvatus strain ATCC 51436. Not active against Gram-negative bacterium S.enteritidis strain ATCC 13076. The mode of action appears to be non-lytic. Inactivated by proteinase K, but insensitive to trypsin, alpha-chymotrypsin, pepsin and papain. This chain is Bacteriocin weissellin-A, found in Weissella paramesenteroides (Leuconostoc paramesenteroides).